The primary structure comprises 201 residues: 3-isopropylmalate dehydratase small subunit (201 aa).

Belongs to the LeuD family. LeuD type 1 subfamily. In terms of assembly, heterodimer of LeuC and LeuD.

The catalysed reaction is (2R,3S)-3-isopropylmalate = (2S)-2-isopropylmalate. Its pathway is amino-acid biosynthesis; L-leucine biosynthesis; L-leucine from 3-methyl-2-oxobutanoate: step 2/4. Catalyzes the isomerization between 2-isopropylmalate and 3-isopropylmalate, via the formation of 2-isopropylmaleate. The chain is 3-isopropylmalate dehydratase small subunit from Sinorhizobium fredii (strain NBRC 101917 / NGR234).